A 514-amino-acid chain; its full sequence is Probable endopolygalacturonase D (514 aa).

The first 16 residues, methionine 1–alanine 16, serve as a signal peptide directing secretion. The tract at residues isoleucine 134–threonine 166 is disordered. The span at serine 136–threonine 166 shows a compositional bias: low complexity. Cysteine 173 and cysteine 188 are joined by a disulfide. Residue asparagine 240 is glycosylated (N-linked (GlcNAc...) asparagine). 7 PbH1 repeats span residues valine 280–asparagine 302, threonine 303–serine 341, serine 342–serine 363, glycine 364–serine 384, valine 393–threonine 414, valine 422–glutamine 444, and serine 456–glycine 500. Positions threonine 312–aspartate 335 are disordered. Residue asparagine 322 is glycosylated (N-linked (GlcNAc...) asparagine). Aspartate 356 functions as the Proton donor in the catalytic mechanism. Cysteines 358 and 374 form a disulfide. A glycan (N-linked (GlcNAc...) asparagine) is linked at asparagine 366. Histidine 378 is a catalytic residue. Asparagine 429 carries N-linked (GlcNAc...) asparagine glycosylation. Cysteine 483 and cysteine 488 form a disulfide bridge. Asparagine 490 carries N-linked (GlcNAc...) asparagine glycosylation. An intrachain disulfide couples cysteine 506 to cysteine 513.

This sequence belongs to the glycosyl hydrolase 28 family.

It is found in the secreted. The enzyme catalyses (1,4-alpha-D-galacturonosyl)n+m + H2O = (1,4-alpha-D-galacturonosyl)n + (1,4-alpha-D-galacturonosyl)m.. Functionally, involved in maceration and soft-rotting of plant tissue. Hydrolyzes the 1,4-alpha glycosidic bonds of de-esterified pectate in the smooth region of the plant cell wall. The sequence is that of Probable endopolygalacturonase D (pgaD) from Emericella nidulans (strain FGSC A4 / ATCC 38163 / CBS 112.46 / NRRL 194 / M139) (Aspergillus nidulans).